A 333-amino-acid chain; its full sequence is Protein FAM170A (333 aa).

Disordered stretches follow at residues 1–45 (MKRR…GVGE), 73–107 (LQDS…PSYK), and 143–214 (ETSE…AKTP). Basic and acidic residues predominate over residues 10 to 29 (LEIEESKEAGISKSQEDISH). Residues 92–105 (TTAPSQQASSSCPS) are compositionally biased toward low complexity. Residues 143 to 156 (ETSESLEKQPRMEE) show a composition bias toward basic and acidic residues. Residues 170-179 (SDVSTRNLLS) show a composition bias toward polar residues. Basic and acidic residues predominate over residues 185–196 (GEEKEHEEKPES). Thr-213 is subject to Phosphothreonine. Residues 224-248 (FRCMACCRVFATMESLQEHVQYGIR) form a C2H2-type; degenerate zinc finger. The disordered stretch occupies residues 267–333 (MESESTQEEE…RKDHCDNSGS (67 aa)). The segment covering 271–281 (STQEEEEDHTE) has biased composition (acidic residues). Basic and acidic residues predominate over residues 282 to 293 (ETEKPKEEKAEE). Ser-308 is subject to Phosphoserine.

Belongs to the FAM170 family. In terms of tissue distribution, testis-specific.

The protein localises to the nucleus. Its function is as follows. Acts as a nuclear transcription factor that positively regulates the expression of heat shock genes. Binds to heat shock promoter elements (HSE). This chain is Protein FAM170A (Fam170a), found in Mus musculus (Mouse).